We begin with the raw amino-acid sequence, 160 residues long: MSDEAKEKRELESQKESSHNKSEKSVEPKPKRRRRRNYDDYDAEVAKEETKAKNGLTKSENNGTVEDSESDMDDAKLDALMGNEGEEEEDDLAEIDTSNIITSGRRTRGKVIDYKKTAEELDKKEPSTDSKDDVGYGEKEEDEEDEEDEEDEEDDDFKEQ.

Residues 1–29 show a composition bias toward basic and acidic residues; that stretch reads MSDEAKEKRELESQKESSHNKSEKSVEPK. The disordered stretch occupies residues 1 to 160; it reads MSDEAKEKRE…DEEDDDFKEQ (160 aa). At Ser2 the chain carries N-acetylserine. Positions 56-65 are enriched in polar residues; that stretch reads LTKSENNGTV. Residues Ser68 and Ser70 each carry the phosphoserine modification. The segment covering 84 to 94 has biased composition (acidic residues); it reads EGEEEEDDLAE. Residues 87-108 are important for H2A.Z-H2B binding; sequence EEEDDLAEIDTSNIITSGRRTR. Over residues 110–138 the composition is skewed to basic and acidic residues; sequence KVIDYKKTAEELDKKEPSTDSKDDVGYGE. A compositionally biased stretch (acidic residues) spans 139–160; that stretch reads KEEDEEDEEDEEDEEDDDFKEQ.

Belongs to the CHZ1 family. As to quaternary structure, forms a heterotrimer with H2A.Z-H2B, stabilizing the association of the histone dimer. Also, with a lower affinity, forms a heterotrimer with H2A-H2B.

The protein localises to the nucleus. Functionally, forms a chaperone-bound H2A.Z-H2B complex that acts as a source for SWR1 complex-dependent H2A to H2A.Z histone replacement in chromatin. In Saccharomyces cerevisiae (strain YJM789) (Baker's yeast), this protein is Histone H2A.Z-specific chaperone CHZ1 (CHZ1).